A 549-amino-acid chain; its full sequence is Chaperonin GroEL (549 aa).

Residues 29–32, lysine 50, 86–90, glycine 418, and aspartate 499 each bind ATP; these read TAGP and DGTTT.

This sequence belongs to the chaperonin (HSP60) family. Forms a cylinder of 14 subunits composed of two heptameric rings stacked back-to-back. Interacts with the co-chaperonin GroES.

The protein localises to the cytoplasm. It carries out the reaction ATP + H2O + a folded polypeptide = ADP + phosphate + an unfolded polypeptide.. In terms of biological role, together with its co-chaperonin GroES, plays an essential role in assisting protein folding. The GroEL-GroES system forms a nano-cage that allows encapsulation of the non-native substrate proteins and provides a physical environment optimized to promote and accelerate protein folding. The polypeptide is Chaperonin GroEL (Wolbachia pipientis wMel).